Here is a 646-residue protein sequence, read N- to C-terminus: Lipoteichoic acid synthase (646 aa).

The Cytoplasmic segment spans residues 1–7 (MSLPKKK). Residues 8 to 28 (IGIFAFFLLTVFTITLKTYFS) traverse the membrane as a helical segment. Residues 29 to 43 (YYVDFSLGVKGLVQN) are Extracellular-facing. Residues 44-64 (LILIMNPYSLIALVLSVFLFF) traverse the membrane as a helical segment. Residues 65–68 (KGKK) are Cytoplasmic-facing. Residues 69–89 (AFWFIFIGGFLLTFLLYANVV) traverse the membrane as a helical segment. At 90–119 (YFRFFSDFLTFSTLNQAGNVESMGGAVSAS) the chain is on the extracellular side. A helical membrane pass occupies residues 120-140 (FKWYDFVYFIDTIIYLAILIF). At 141–153 (KRKWLDNRAFSKK) the chain is on the cytoplasmic side. A helical transmembrane segment spans residues 154–174 (FVPVVMATSVALFFLNLAFAE). Topologically, residues 175–646 (TDRPELLTRT…KSGPKGNEKK (472 aa)) are extracellular. The Mn(2+) site is built by E255 and T300. The active site involves T300. H416 contributes to the substrate binding site. Mn(2+) is bound by residues D475 and H476.

Belongs to the LTA synthase family. In terms of processing, proteolytically cleaved.

The protein resides in the cell membrane. It localises to the secreted. It participates in cell wall biogenesis; lipoteichoic acid biosynthesis. Catalyzes the polymerization of lipoteichoic acid (LTA) polyglycerol phosphate, a reaction that presumably uses phosphatidylglycerol (PG) as substrate. Is required for staphylococcal growth and cell division process. This is Lipoteichoic acid synthase (ltaS) from Staphylococcus epidermidis (strain ATCC 12228 / FDA PCI 1200).